The following is a 194-amino-acid chain: Small ribosomal subunit protein uS4c (194 aa).

Positions 82 to 143 (MRLDNILFRL…KERSKVLIQN (62 aa)) constitute an S4 RNA-binding domain.

The protein belongs to the universal ribosomal protein uS4 family. Part of the 30S ribosomal subunit. Contacts protein S5. The interaction surface between S4 and S5 is involved in control of translational fidelity.

Its subcellular location is the plastid. The protein resides in the chloroplast. Its function is as follows. One of the primary rRNA binding proteins, it binds directly to 16S rRNA where it nucleates assembly of the body of the 30S subunit. In terms of biological role, with S5 and S12 plays an important role in translational accuracy. The protein is Small ribosomal subunit protein uS4c (rps4) of Cypella sp. (strain Porto Alegre 027).